The primary structure comprises 554 residues: 4-coumarate--CoA ligase 3 (554 aa).

ATP-binding residues include Ser-188, Ser-189, Gly-190, Thr-191, Thr-192, and Lys-196. 2 residues coordinate (E)-4-coumaroyl-AMP: Tyr-238 and Ser-242. A CoA-binding site is contributed by Lys-259. An SBD1 region spans residues 261 to 330 (DLGALVDLVR…AKIPNAVLGQ (70 aa)). (E)-4-coumaroyl-AMP is bound by residues Ala-308, Gln-330, Gly-331, Thr-335, and Met-343. The ATP site is built by Gln-330, Gly-331, and Thr-335. Residues 331-398 (GYGMTEAGPV…IRGEQIMKGY (68 aa)) form an SBD2 region. ATP contacts are provided by Asp-419 and Arg-434. 2 residues coordinate (E)-4-coumaroyl-AMP: Lys-436 and Lys-440. Lys-442 and Gly-443 together coordinate CoA. Position 525 (Lys-525) interacts with ATP.

The protein belongs to the ATP-dependent AMP-binding enzyme family. The cofactor is Mg(2+). In terms of tissue distribution, expressed in root exodermis and epidermis cells, stem vascular cells, leaf developing vascular bundle cells and parenchyma cells, lemma, palea, stamens and pistil.

The enzyme catalyses (E)-ferulate + ATP + CoA = (E)-feruloyl-CoA + AMP + diphosphate. It catalyses the reaction (E)-4-coumarate + ATP + CoA = (E)-4-coumaroyl-CoA + AMP + diphosphate. It carries out the reaction (E)-caffeate + ATP + CoA = (E)-caffeoyl-CoA + AMP + diphosphate. The catalysed reaction is (E)-cinnamate + ATP + CoA = (E)-cinnamoyl-CoA + AMP + diphosphate. The enzyme catalyses (E)-ferulate + ATP + H(+) = (E)-feruloyl-AMP + diphosphate. It catalyses the reaction (E)-feruloyl-AMP + CoA = (E)-feruloyl-CoA + AMP + H(+). It carries out the reaction (E)-4-coumarate + ATP + H(+) = (E)-4-coumaroyl-AMP + diphosphate. The catalysed reaction is (E)-4-coumaroyl-AMP + CoA = (E)-4-coumaroyl-CoA + AMP + H(+). The enzyme catalyses (E)-caffeate + ATP + H(+) = (E)-caffeoyl-AMP + diphosphate. It catalyses the reaction (E)-caffeoyl-AMP + CoA = (E)-caffeoyl-CoA + AMP + H(+). Its pathway is phytoalexin biosynthesis; 3,4',5-trihydroxystilbene biosynthesis; 3,4',5-trihydroxystilbene from trans-4-coumarate: step 1/2. In terms of biological role, involved in the phenylpropanoid metabolism by mediating the activation of a number of hydroxycinnamates for the biosynthesis of monolignols and other phenolic secondary metabolites. Catalyzes the formation of CoA esters of cinnamate, 4-coumarate, caffeate and ferulate. Is more efficient with substrates in the following order: ferulate &gt; 4-coumarate &gt; caffeate &gt; cinnamate. Possesses very high activity compared to 4CL1, 4CL2, 4CL4 and 4CL5. Cannot convert sinapate to its corresponding CoA ester. May play a role in the synthesis of lignin as well as other phenolic compounds. Follows a two-step reaction mechanism, wherein the carboxylate substrate first undergoes adenylation by ATP, followed by a thioesterification in the presence of CoA to yield the final CoA thioester. The chain is 4-coumarate--CoA ligase 3 from Oryza sativa subsp. japonica (Rice).